Here is a 242-residue protein sequence, read N- to C-terminus: MVILGVNVDHIATVRQARKTFEPDPVMAATLAILGGADGITIHLREDRRHIQDRDLKILREVVPCELNLEMAATEEMINIALNIKPDMVTIVPEKRQELTTEGGLNVIELKDSLKEAIKKIKDAGIPVSLFINPERNDIECSKDIGADMVEIHTGYYSESRGDVQLKELERIKDAVAYSISLGLKTNAGHGLNYYNVKSIAAIKGLRGLYIGHSIIARAVLVGIEKAVREMKNLIKEACINA.

Asn7 is a binding site for 3-amino-2-oxopropyl phosphate. 9–10 (DH) contacts 1-deoxy-D-xylulose 5-phosphate. Arg18 serves as a coordination point for 3-amino-2-oxopropyl phosphate. The active-site Proton acceptor is the His43. The 1-deoxy-D-xylulose 5-phosphate site is built by Arg45 and His50. Glu70 acts as the Proton acceptor in catalysis. Thr100 lines the 1-deoxy-D-xylulose 5-phosphate pocket. His190 acts as the Proton donor in catalysis. 3-amino-2-oxopropyl phosphate is bound by residues Gly191 and 212–213 (GH).

This sequence belongs to the PNP synthase family. In terms of assembly, homooctamer; tetramer of dimers.

It localises to the cytoplasm. It carries out the reaction 3-amino-2-oxopropyl phosphate + 1-deoxy-D-xylulose 5-phosphate = pyridoxine 5'-phosphate + phosphate + 2 H2O + H(+). It participates in cofactor biosynthesis; pyridoxine 5'-phosphate biosynthesis; pyridoxine 5'-phosphate from D-erythrose 4-phosphate: step 5/5. In terms of biological role, catalyzes the complicated ring closure reaction between the two acyclic compounds 1-deoxy-D-xylulose-5-phosphate (DXP) and 3-amino-2-oxopropyl phosphate (1-amino-acetone-3-phosphate or AAP) to form pyridoxine 5'-phosphate (PNP) and inorganic phosphate. This is Pyridoxine 5'-phosphate synthase from Thermodesulfovibrio yellowstonii (strain ATCC 51303 / DSM 11347 / YP87).